We begin with the raw amino-acid sequence, 578 residues long: Proline--tRNA ligase (578 aa).

It belongs to the class-II aminoacyl-tRNA synthetase family. ProS type 1 subfamily. Homodimer.

The protein localises to the cytoplasm. It carries out the reaction tRNA(Pro) + L-proline + ATP = L-prolyl-tRNA(Pro) + AMP + diphosphate. Functionally, catalyzes the attachment of proline to tRNA(Pro) in a two-step reaction: proline is first activated by ATP to form Pro-AMP and then transferred to the acceptor end of tRNA(Pro). As ProRS can inadvertently accommodate and process non-cognate amino acids such as alanine and cysteine, to avoid such errors it has two additional distinct editing activities against alanine. One activity is designated as 'pretransfer' editing and involves the tRNA(Pro)-independent hydrolysis of activated Ala-AMP. The other activity is designated 'posttransfer' editing and involves deacylation of mischarged Ala-tRNA(Pro). The misacylated Cys-tRNA(Pro) is not edited by ProRS. This Burkholderia cenocepacia (strain ATCC BAA-245 / DSM 16553 / LMG 16656 / NCTC 13227 / J2315 / CF5610) (Burkholderia cepacia (strain J2315)) protein is Proline--tRNA ligase.